The following is a 101-amino-acid chain: Small ribosomal subunit protein uS14 (101 aa).

The protein belongs to the universal ribosomal protein uS14 family. Part of the 30S ribosomal subunit. Contacts proteins S3 and S10.

In terms of biological role, binds 16S rRNA, required for the assembly of 30S particles and may also be responsible for determining the conformation of the 16S rRNA at the A site. The protein is Small ribosomal subunit protein uS14 of Tropheryma whipplei (strain TW08/27) (Whipple's bacillus).